Consider the following 922-residue polypeptide: Translation initiation factor IF-2 (922 aa).

The interval 243–329 (AAREAAKLAE…GKSKSGQEET (87 aa)) is disordered. Residues 250-264 (LAEAQKAAAPAPAAP) show a composition bias toward low complexity. Basic and acidic residues predominate over residues 267-298 (KTLHKPDKPAAAKGAKGPDKKPAGAWKDDAAR). Residues 422–589 (ARPPVVTVMG…AILLQAEVLE (168 aa)) enclose the tr-type G domain. The segment at 431–438 (GHVDHGKT) is G1. 431–438 (GHVDHGKT) lines the GTP pocket. The tract at residues 456–460 (GITQH) is G2. Positions 477–480 (DTPG) are G3. Residues 477–481 (DTPGH) and 531–534 (NKID) each bind GTP. Residues 531–534 (NKID) form a G4 region. The interval 567-569 (SAK) is G5.

This sequence belongs to the TRAFAC class translation factor GTPase superfamily. Classic translation factor GTPase family. IF-2 subfamily.

Its subcellular location is the cytoplasm. Functionally, one of the essential components for the initiation of protein synthesis. Protects formylmethionyl-tRNA from spontaneous hydrolysis and promotes its binding to the 30S ribosomal subunits. Also involved in the hydrolysis of GTP during the formation of the 70S ribosomal complex. The protein is Translation initiation factor IF-2 of Thiobacillus denitrificans (strain ATCC 25259 / T1).